A 130-amino-acid chain; its full sequence is uncharacterized protein (130 aa).

This is an uncharacterized protein from Saccharomyces cerevisiae (strain ATCC 204508 / S288c) (Baker's yeast).